A 188-amino-acid chain; its full sequence is Elongation factor P-like protein (188 aa).

The protein belongs to the elongation factor P family.

This is Elongation factor P-like protein from Xanthomonas campestris pv. campestris (strain 8004).